We begin with the raw amino-acid sequence, 1406 residues long: DNA-directed RNA polymerase subunit beta' (1406 aa).

Zn(2+) contacts are provided by cysteine 70, cysteine 72, cysteine 85, and cysteine 88. Positions 460, 462, and 464 each coordinate Mg(2+). Zn(2+) is bound by residues cysteine 814, cysteine 888, cysteine 895, and cysteine 898.

It belongs to the RNA polymerase beta' chain family. The RNAP catalytic core consists of 2 alpha, 1 beta, 1 beta' and 1 omega subunit. When a sigma factor is associated with the core the holoenzyme is formed, which can initiate transcription. The cofactor is Mg(2+). Requires Zn(2+) as cofactor.

The enzyme catalyses RNA(n) + a ribonucleoside 5'-triphosphate = RNA(n+1) + diphosphate. Its function is as follows. DNA-dependent RNA polymerase catalyzes the transcription of DNA into RNA using the four ribonucleoside triphosphates as substrates. In Sodalis glossinidius (strain morsitans), this protein is DNA-directed RNA polymerase subunit beta'.